The following is an 85-amino-acid chain: Protein RnfH (85 aa).

This sequence belongs to the UPF0125 (RnfH) family.

The protein is Protein RnfH of Cereibacter sphaeroides (strain ATCC 17029 / ATH 2.4.9) (Rhodobacter sphaeroides).